A 1804-amino-acid chain; its full sequence is Collagen alpha-1(XI) chain (1804 aa).

A signal peptide spans 1 to 34 (MEPWSRWKTKRWIWDLTISTLALTFLFQAREVRG). Positions 35-511 (AAPVDILKAL…SKGPTISAQE (477 aa)) are cleaved as a propeptide — N-terminal propeptide. Cystine bridges form between Cys60–Cys242 and Cys181–Cys235. In terms of domain architecture, Laminin G-like spans 70 to 242 (DVAYRVTEEA…DYCDHYSPDC (173 aa)). Positions 229–417 (KAAYDYCDHY…DFTETSINGH (189 aa)) are nonhelical region. The span at 315–329 (YQTETPRRVSGSNEP) shows a compositional bias: polar residues. 2 disordered regions span residues 315-334 (YQTETPRRVSGSNEPNPVEE) and 433-506 (EPGM…KGPT). Residues 418-506 (GAYGEKGQKG…YGGDGSKGPT (89 aa)) form a triple-helical region (interrupted) region. One can recognise a Collagen-like 1 domain in the interval 440–488 (GPPGPAGPAGLMGPPGLQGPSGLPGDPGDRGPPGRPGLPGADGLPGPPG). 2 stretches are compositionally biased toward low complexity: residues 447-465 (PAGLMGPPGLQGPSGLPGD) and 477-494 (LPGADGLPGPPGTMLMLP). Residues 507–509 (ISA) are short nonhelical segment. Residues 510–527 (QEAQAQAILQQARIALRG) form a telopeptide region. Positions 526-1567 (RGPPGPMGLT…SIQGDAGDNI (1042 aa)) are disordered. Collagen-like domains are found at residues 527–584 (GPPG…GADG) and 567–623 (PPGP…GPPG). Residues 528–1540 (PPGPMGLTGR…PGPPGPPGEV (1013 aa)) are triple-helical region. Gly residues-rich tracts occupy residues 539–548 (GPVGGPGSAG) and 581–590 (GADGGRGMPG). The residue at position 610 (Lys610) is an Allysine. A compositionally biased stretch (low complexity) spans 639 to 655 (PRGLPGEAGPRGLLGPR). Pro residues predominate over residues 697 to 708 (QGLPGPQGPIGP). The segment covering 715-726 (QGKPGLAGLPGA) has biased composition (low complexity). The Collagen-like 4 domain occupies 728 to 781 (GPPGHPGKEGQSGEKGALGPPGPQGPIGYPGPRGVKGADGVRGLKGSKGEKGED). Residues 805–814 (RGEDGPEGPK) are compositionally biased toward basic and acidic residues. 3 stretches are compositionally biased toward low complexity: residues 873–901 (KPGPRGQRGPTGPRGSRGARGPTGKPGPK), 916–925 (RGPQGPQGPV), and 969–979 (PQGPTGETGPI). Residues 1040–1049 (GLKGGEGPQG) are compositionally biased toward gly residues. Pro residues predominate over residues 1074 to 1083 (RPGPQGPPGP). Residues 1084-1108 (AGEKGAPGEKGPQGPAGRDGVQGPV) are compositionally biased toward low complexity. A compositionally biased stretch (gly residues) spans 1160–1169 (GIAGGDGEPG). Over residues 1216–1227 (MGPPGPPGPRGP) the composition is skewed to pro residues. 2 stretches are compositionally biased toward low complexity: residues 1240–1249 (PGSIGSVGVV) and 1282–1296 (AGPPGAAGPAGIKGP). Positions 1341–1360 (QPGPPGPSGEAGPPGPPGKR) are enriched in pro residues. Composition is skewed to low complexity over residues 1383–1392 (AEGPPGKTGP) and 1417–1426 (QGLPGAAGQD). Collagen-like domains follow at residues 1427–1482 (GPPG…SPGA) and 1481–1539 (GAKG…PPGE). Positions 1428 to 1437 (PPGPLGPPGL) are enriched in pro residues. At Lys1450 the chain carries Allysine. Residues 1453–1462 (PGLIGLIGPP) are compositionally biased toward low complexity. Over residues 1481-1490 (GAKGDGGIPG) the composition is skewed to gly residues. Positions 1491–1507 (PAGPIGPPGPPGLPGPA) are enriched in pro residues. Residues 1509 to 1519 (PKGNKGSSGPT) show a composition bias toward low complexity. The span at 1528–1537 (PGPPGPPGPP) shows a compositional bias: pro residues. The segment at 1541–1561 (IQPLPILSPKKTRRHTESIQG) is nonhelical region (C-terminal). Residues 1562 to 1804 (DAGDNILDYS…FEVGPACFLG (243 aa)) constitute a propeptide, C-terminal propeptide. The Fibrillar collagen NC1 domain occupies 1575-1803 (EEIFGSLNSL…GFEVGPACFL (229 aa)). Residues Cys1605 and Cys1637 are joined by a disulfide bond. Residues Asp1623, Asn1625, Gln1626, Cys1628, and Asp1631 each contribute to the Ca(2+) site. An N-linked (GlcNAc...) asparagine glycan is attached at Asn1638. Disulfide bonds link Cys1646–Cys1801 and Cys1712–Cys1755.

Belongs to the fibrillar collagen family. In terms of assembly, trimers composed of three different chains: alpha 1(XI), alpha 2(XI), and alpha 3(XI). Alpha 3(XI) is a post-translational modification of alpha 1(II). Alpha 1(V) can also be found instead of alpha 3(XI)=1(II). Post-translationally, prolines at the third position of the tripeptide repeating unit (G-X-Y) are hydroxylated in some or all of the chains. N-glycosylated.

Its subcellular location is the secreted. It localises to the extracellular space. The protein resides in the extracellular matrix. Functionally, may play an important role in fibrillogenesis by controlling lateral growth of collagen II fibrils. The sequence is that of Collagen alpha-1(XI) chain (Col11a1) from Mus musculus (Mouse).